A 236-amino-acid chain; its full sequence is 2,3,4,5-tetrahydropyridine-2,6-dicarboxylate N-acetyltransferase (236 aa).

Belongs to the transferase hexapeptide repeat family. DapH subfamily.

The enzyme catalyses (S)-2,3,4,5-tetrahydrodipicolinate + acetyl-CoA + H2O = L-2-acetamido-6-oxoheptanedioate + CoA. It participates in amino-acid biosynthesis; L-lysine biosynthesis via DAP pathway; LL-2,6-diaminopimelate from (S)-tetrahydrodipicolinate (acetylase route): step 1/3. Functionally, catalyzes the transfer of an acetyl group from acetyl-CoA to tetrahydrodipicolinate. In Clostridium perfringens (strain ATCC 13124 / DSM 756 / JCM 1290 / NCIMB 6125 / NCTC 8237 / Type A), this protein is 2,3,4,5-tetrahydropyridine-2,6-dicarboxylate N-acetyltransferase.